We begin with the raw amino-acid sequence, 236 residues long: Phosphoribosylaminoimidazole-succinocarboxamide synthase (236 aa).

It belongs to the SAICAR synthetase family.

It catalyses the reaction 5-amino-1-(5-phospho-D-ribosyl)imidazole-4-carboxylate + L-aspartate + ATP = (2S)-2-[5-amino-1-(5-phospho-beta-D-ribosyl)imidazole-4-carboxamido]succinate + ADP + phosphate + 2 H(+). Its pathway is purine metabolism; IMP biosynthesis via de novo pathway; 5-amino-1-(5-phospho-D-ribosyl)imidazole-4-carboxamide from 5-amino-1-(5-phospho-D-ribosyl)imidazole-4-carboxylate: step 1/2. This Coprothermobacter proteolyticus (strain ATCC 35245 / DSM 5265 / OCM 4 / BT) protein is Phosphoribosylaminoimidazole-succinocarboxamide synthase.